Consider the following 495-residue polypeptide: Pre-glycoprotein polyprotein GP complex (495 aa).

Glycine 2 is lipidated: N-myristoyl glycine; by host. Topologically, residues glycine 2–glutamate 17 are extracellular. Residues alanine 18–lysine 33 traverse the membrane as a helical segment. Topologically, residues glycine 34–serine 58 are cytoplasmic. Cysteine 57 contributes to the Zn(2+) binding site. Topologically, residues glutamate 59–aspartate 434 are extracellular. Cystine bridges form between cysteine 92–cysteine 236, cysteine 281–cysteine 294, cysteine 303–cysteine 312, and cysteine 366–cysteine 387. Asparagine 95 and asparagine 188 each carry an N-linked (GlcNAc...) asparagine; by host glycan. N-linked (GlcNAc...) asparagine; by host glycans are attached at residues asparagine 367, asparagine 375, asparagine 392, and asparagine 397. A helical membrane pass occupies residues isoleucine 435 to proline 455. Topologically, residues threonine 456–histidine 495 are cytoplasmic. Residues histidine 457, histidine 459, cysteine 465, histidine 469, cysteine 477, cysteine 479, and histidine 495 each coordinate Zn(2+).

Belongs to the arenaviridae GPC protein family. In terms of assembly, interacts with glycoprotein G2. Part of the GP complex (GP-C) together with glycoprotein G1 and glycoprotein G2. The GP-complex interacts with protein Z, which interacts with ribonucleocapsid; these interactions may induce virion budding. Homotrimer; disulfide-linked. In pre-fusion state, G1 homotrimers bind G2 homotrimers via ionic interactions. Part of the GP complex (GP-C) together with glycoprotein G2 and the stable signal peptide. The GP-complex interacts with protein Z, which interacts with ribonucleocapsid; these interactions may induce virion budding. As to quaternary structure, homotrimer. Interacts with the stable signal peptide. In pre-fusion state, G2 homotrimers bind G1 homotrimers via ionic interactions. Part of the GP complex (GP-C) together with glycoprotein G1 and the stable signal peptide. Acidification in the endosome triggers rearrangements, which ultimately leads to a 6 helix bundle formed by the two heptad repeat domains (HR1 and HR2) in post-fusion state. The GP-complex interacts with protein Z, which interacts with ribonucleocapsid; these interactions may induce virion budding. In terms of processing, specific enzymatic cleavages in vivo yield mature proteins. GP-C polyprotein is cleaved in the endoplasmic reticulum by the host protease MBTPS1. Only cleaved glycoprotein is incorporated into virions. The SSP remains stably associated with the GP complex following cleavage by signal peptidase and plays crucial roles in the trafficking of GP through the secretory pathway. Post-translationally, myristoylation is necessary for GP2-mediated fusion activity.

The protein localises to the virion membrane. The protein resides in the host endoplasmic reticulum membrane. Its subcellular location is the host Golgi apparatus membrane. It localises to the host cell membrane. Functionally, functions as a cleaved signal peptide that is retained as the third component of the GP complex (GP-C). Helps to stabilize the spike complex in its native conformation. The SSP is required for efficient glycoprotein expression, post-translational maturation cleavage of G1 and G2, glycoprotein transport to the cell surface plasma membrane, formation of infectious virus particles, and acid pH-dependent glycoprotein-mediated cell fusion. In terms of biological role, forms the virion spikes together with glycoprotein G2. The glycoprotein spike trimers are connected to the underlying matrix. Interacts with the host receptor leading to virus endocytosis. Forms the virion spikes together with glycoprotein G1. The glycoprotein spike trimers are connected to the underlying matrix. Class I viral fusion protein that directs fusion of viral and host endosomal membranes, leading to delivery of the nucleocapsid into the cytoplasm. Membrane fusion is mediated by irreversible conformational changes induced by acidification. This chain is Pre-glycoprotein polyprotein GP complex, found in Tacaribe virus (strain Franze-Fernandez) (TCRV).